Here is a 499-residue protein sequence, read N- to C-terminus: Hepatic triacylglycerol lipase (499 aa).

The first 22 residues, 1–22 (MDTSPLCFSILLVLCIFIQSSA), serve as a signal peptide directing secretion. N-linked (GlcNAc...) asparagine glycosylation is found at asparagine 42 and asparagine 78. Serine 168 functions as the Nucleophile in the catalytic mechanism. Aspartate 194 acts as the Charge relay system in catalysis. The segment at 254–277 (CHFLELYRHIAQHGFNAITQTIKC) is essential for determining substrate specificity. Residue histidine 279 is the Charge relay system of the active site. Residues 352 to 486 (YHYQFKIQFI…RPTQEKIFVK (135 aa)) form the PLAT domain. Asparagine 362 and asparagine 397 each carry an N-linked (GlcNAc...) asparagine glycan.

This sequence belongs to the AB hydrolase superfamily. Lipase family. In terms of assembly, homodimer.

It localises to the secreted. It catalyses the reaction a triacylglycerol + H2O = a diacylglycerol + a fatty acid + H(+). The enzyme catalyses a 1-acyl-sn-glycero-3-phosphocholine + H2O = sn-glycerol 3-phosphocholine + a fatty acid + H(+). It carries out the reaction a 1,2-diacyl-sn-glycero-3-phosphocholine + H2O = a 2-acyl-sn-glycero-3-phosphocholine + a fatty acid + H(+). The catalysed reaction is 1,2,3-tri-(9Z-octadecenoyl)-glycerol + H2O = di-(9Z)-octadecenoylglycerol + (9Z)-octadecenoate + H(+). It catalyses the reaction 1,2-di-(9Z-octadecenoyl)-sn-glycero-3-phosphocholine + H2O = (9Z-octadecenoyl)-sn-glycero-3-phosphocholine + (9Z)-octadecenoate + H(+). The enzyme catalyses 1,2,3-tributanoylglycerol + H2O = dibutanoylglycerol + butanoate + H(+). It carries out the reaction 1,2-dihexadecanoyl-sn-glycero-3-phosphocholine + H2O = hexadecanoyl-sn-glycero-3-phosphocholine + hexadecanoate + H(+). The catalysed reaction is 1,2-di-(9Z-octadecenoyl)-sn-glycerol + H2O = 2-(9Z-octadecenoyl)-glycerol + (9Z)-octadecenoate + H(+). It catalyses the reaction 1,2,3-tri-(9Z-octadecenoyl)-glycerol + H2O = 2,3-di-(9Z)-octadecenoyl-sn-glycerol + (9Z)-octadecenoate + H(+). The enzyme catalyses 1-(9Z-octadecenoyl)-sn-glycero-3-phospho-L-serine + H2O = sn-glycero-3-phospho-L-serine + (9Z)-octadecenoate + H(+). It carries out the reaction 1-hexadecanoyl-sn-glycero-3-phosphocholine + H2O = sn-glycerol 3-phosphocholine + hexadecanoate + H(+). The catalysed reaction is 1,3-di-(9Z-octadecenoyl)-glycerol + H2O = 3-(9Z-octadecenoyl)-sn-glycerol + (9Z)-octadecenoate + H(+). Its activity is regulated as follows. Phospholipase A1 and triacylglycerol lipase are inhibited by sphingomyelin. In terms of biological role, catalyzes the hydrolysis of triglycerides and phospholipids present in circulating plasma lipoproteins, including chylomicrons, intermediate density lipoproteins (IDL), low density lipoproteins (LDL) of large size and high density lipoproteins (HDL), releasing free fatty acids (FFA) and smaller lipoprotein particles. Also exhibits lysophospholipase activity. Can hydrolyze both neutral lipid and phospholipid substrates but shows a greater binding affinity for neutral lipid substrates than phospholipid substrates. In native LDL, preferentially hydrolyzes the phosphatidylcholine species containing polyunsaturated fatty acids at sn-2 position. The polypeptide is Hepatic triacylglycerol lipase (LIPC) (Homo sapiens (Human)).